The following is a 68-amino-acid chain: uncharacterized protein (68 aa).

The tract at residues 1–42 (MHLCQNGHYYKPHRASAEKVPYLKKKKKNSRNEGKAKKKNEK) is disordered.

This is an uncharacterized protein from Saccharomyces cerevisiae (strain ATCC 204508 / S288c) (Baker's yeast).